The following is a 1602-amino-acid chain: MNQNQIQQLTSHLSQALDQNYDVVNMDAVLSVICALEGTTITKEQLEATRLAKYINQLRRRTKNEHLARRAKSLLKMWREMVGIQQTANDSQHHHSQPTSLPTPPSAHFYKYTAGSADSNLTETVVHLPVSPSVPSHRTISDLHSNIDSSEPPPAVLPSQHQSNFLNLINNISKCEREESNSSMLIQAHKQPQSQQFQNRPLGLPLPFISEQSLNSVSISSDVGNDKKGEASIVIDIVTDSDENDNESASTIQGKPTAAASAPFTISPAPCPRPKKFKKDKKHKERDRSKSSLLAQNELIGQHSSRYSAKVKEGQSQTAQATDSEIFSLSNSSMSSILSGDAALLNPQHKFRANASELTFTGRFKPVNHLDSANQDNSALPIGQNIVFRQNESERPIFEDSITNDSSTSCSRLSPPTVEERRKSDKIDDSIRQQIATSIQMPMPSIGLGHESNSRTEYLENSSKSQVPKKRGRKKGSKGVDAVIAKESSSLSQQIFFGVGSTVKKVKTTKELFSEIQSRKLITAVQSPTSNISNSSISRELTTRALMPRPTSSCSDTSIHSPQIMETYSGNVTLMGVDKFSNKNEDAGNTDSDTITSEPSQDSNKSQEIKECTSLDSNSNSLQTLSLAKKSMHTSKSENYSDVTTQLMHLIHSIKGPLSVYEVEKLYRAQIVPCTCLVIEEICNPFGEPINLSSDNGVGDPKSDSNNDNVSRHKKQEEQLPKLERLSDNDFSMDTPQKPVKSIFDLDFDEDEDPLQSIINDIRMPPTKLEETKENADLKNALAHLPMNISSLDVASVNADTVQNQINSHNQEGETSEEQNVAIPVFTCHEDPDCVAKQRFHVQTNKVNNFHINALHNFYIPNINGNWDSIDSSIVSESTITDFLNTLGSYTVTDGADVVPKYGSLTYDRIRKDLSSIKFTSSFKTRPLKSFMPPFLGVAKCLPTCRLARSSFKKKQIQSPPPPLIVIPSTIEGLDPDIMQKDYNGGSPLKVDVDVLVSGHDNNESNVQMQVNLQTKSDPTLSYNLLKLANDELPFEETEPNDKGSEYENQDNGRFSSSSNSSCSNSSNSSLKKTQDSINEKLRNQRSQRYRVQSVEEETNRKRRGKNRKKRNIKENPPIKRIKISLNGTISNLSSSNNSSSSESETETGLENENEVENDYENNNDEEYAVVQRPTCGDGASNNHIVMTIKKTPSKINSPANSMSATSPINASETRNVKNAFSDSNRPNLLTSSTSIAPLYQIDGGRRLLLSKKFSRRPHRRRRYRQCRRKSDLQRKAIDLELKHLFTYKTKPDLDIGSAIKLHKKLFFSHELCKQNTAGRKERILNYSSSSSSNYDDDESDLDGLSSEETAADLKENVNTFNKYNLNIETDNTSAERTVSEDPLKIEEDPYLTSSSNDVTDSDNESDNHEVFDEVAKRVEADEFNELHNNGMLTSFNSISVENQLINEPTLMAVSGSVDTPAPQSNASLASLQNENCDDVNNLCYNNNNLDVIKHSLAASPILNDINYKNVISNTSPRVLANKFSDCIPQNIGNSELSPPIPLPCAEYQTGIRPAPLTDLALSSYADFRCTRIQQFKEWHQVLQLQSYNNEPLIVLPYVVLE.

The region spanning 8 to 85 (QLTSHLSQAL…KMWREMVGIQ (78 aa)) is the TFIIS N-terminal domain. Disordered stretches follow at residues 86–108 (QTAN…PSAH), 238–298 (VTDS…AQNE), 399–481 (EDSI…KGVD), 580–617 (FSNK…SLDS), and 694–736 (SDNG…MDTP). The span at 273 to 285 (RPKKFKKDKKHKE) shows a compositional bias: basic residues. A compositionally biased stretch (polar residues) spans 401-414 (SITNDSSTSCSRLS). Basic and acidic residues predominate over residues 418-431 (VEERRKSDKIDDSI). Residues 467–477 (VPKKRGRKKGS) show a composition bias toward basic residues. Residues 587–604 (AGNTDSDTITSEPSQDSN) show a composition bias toward polar residues. Over residues 715 to 728 (KQEEQLPKLERLSD) the composition is skewed to basic and acidic residues. Residues 792–820 (LDVASVNADTVQNQINSHNQEGETSEEQN) adopt a coiled-coil conformation. Disordered regions lie at residues 1035–1158 (FEET…EVEN) and 1372–1407 (NTSA…NESD). Low complexity predominate over residues 1056 to 1070 (SSSSNSSCSNSSNSS). Positions 1073 to 1083 (KTQDSINEKLR) are enriched in basic and acidic residues. Over residues 1101–1112 (RKRRGKNRKKRN) the composition is skewed to basic residues. Low complexity predominate over residues 1124-1143 (ISLNGTISNLSSSNNSSSSE). Residues 1144–1158 (SETETGLENENEVEN) are compositionally biased toward acidic residues. Residues 1378-1388 (TVSEDPLKIEE) are compositionally biased toward basic and acidic residues.

The protein belongs to the Mediator complex subunit 26 family. As to quaternary structure, component of the Mediator complex.

Its subcellular location is the nucleus. Functionally, component of the Mediator complex, a coactivator involved in the regulated transcription of nearly all RNA polymerase II-dependent genes. Mediator functions as a bridge to convey information from gene-specific regulatory proteins to the basal RNA polymerase II transcription machinery. Mediator is recruited to promoters by direct interactions with regulatory proteins and serves as a scaffold for the assembly of a functional preinitiation complex with RNA polymerase II and the general transcription factors. The chain is Mediator of RNA polymerase II transcription subunit 26 (MED26) from Drosophila pseudoobscura pseudoobscura (Fruit fly).